We begin with the raw amino-acid sequence, 168 residues long: MSLVILGVDPGSRITGFGVVRVANGKIEHINHGVIVMDGDDAFPRRMTELGSAFREVMEKYKPEQVVIEKIFLGKNADSAFKLGHARGVIMYEAGLGGAEVQEYATRSVKKGVTGNGGASKEDVQAILKVMLSLKTISRIDASDALAMACYHAFEMKKKALMQRAVSL.

Residues Asp9, Glu69, and Asp141 contribute to the active site. Residues Asp9, Glu69, and Asp141 each coordinate Mg(2+).

This sequence belongs to the RuvC family. In terms of assembly, homodimer which binds Holliday junction (HJ) DNA. The HJ becomes 2-fold symmetrical on binding to RuvC with unstacked arms; it has a different conformation from HJ DNA in complex with RuvA. In the full resolvosome a probable DNA-RuvA(4)-RuvB(12)-RuvC(2) complex forms which resolves the HJ. Mg(2+) is required as a cofactor.

The protein resides in the cytoplasm. The enzyme catalyses Endonucleolytic cleavage at a junction such as a reciprocal single-stranded crossover between two homologous DNA duplexes (Holliday junction).. Functionally, the RuvA-RuvB-RuvC complex processes Holliday junction (HJ) DNA during genetic recombination and DNA repair. Endonuclease that resolves HJ intermediates. Cleaves cruciform DNA by making single-stranded nicks across the HJ at symmetrical positions within the homologous arms, yielding a 5'-phosphate and a 3'-hydroxyl group; requires a central core of homology in the junction. The consensus cleavage sequence is 5'-(A/T)TT(C/G)-3'. Cleavage occurs on the 3'-side of the TT dinucleotide at the point of strand exchange. HJ branch migration catalyzed by RuvA-RuvB allows RuvC to scan DNA until it finds its consensus sequence, where it cleaves and resolves the cruciform DNA. This chain is Crossover junction endodeoxyribonuclease RuvC, found in Bdellovibrio bacteriovorus (strain ATCC 15356 / DSM 50701 / NCIMB 9529 / HD100).